The primary structure comprises 234 residues: Sugar fermentation stimulation protein A (234 aa).

A DNA-binding region (H-T-H motif) is located at residues 201-220 (LLSEAQQRGVEILAYKAEIS).

The protein belongs to the SfsA family.

Binds to DNA non-specifically. Could be a regulatory factor involved in maltose metabolism. The protein is Sugar fermentation stimulation protein A of Shigella flexneri.